Here is a 141-residue protein sequence, read N- to C-terminus: Large ribosomal subunit protein uL11 (141 aa).

It belongs to the universal ribosomal protein uL11 family. As to quaternary structure, part of the ribosomal stalk of the 50S ribosomal subunit. Interacts with L10 and the large rRNA to form the base of the stalk. L10 forms an elongated spine to which L12 dimers bind in a sequential fashion forming a multimeric L10(L12)X complex. One or more lysine residues are methylated.

In terms of biological role, forms part of the ribosomal stalk which helps the ribosome interact with GTP-bound translation factors. The protein is Large ribosomal subunit protein uL11 of Opitutus terrae (strain DSM 11246 / JCM 15787 / PB90-1).